The sequence spans 141 residues: Large ribosomal subunit protein uL16 (141 aa).

The interval 1 to 20 (MLMPKRTKYRKQMKGRNRGK) is disordered.

It belongs to the universal ribosomal protein uL16 family. In terms of assembly, part of the 50S ribosomal subunit.

Its function is as follows. Binds 23S rRNA and is also seen to make contacts with the A and possibly P site tRNAs. This chain is Large ribosomal subunit protein uL16, found in Helicobacter hepaticus (strain ATCC 51449 / 3B1).